Reading from the N-terminus, the 74-residue chain is Small ribosomal subunit protein eS28 (74 aa).

Belongs to the eukaryotic ribosomal protein eS28 family.

The sequence is that of Small ribosomal subunit protein eS28 from Halorubrum lacusprofundi (strain ATCC 49239 / DSM 5036 / JCM 8891 / ACAM 34).